A 523-amino-acid chain; its full sequence is WD repeat-containing protein WDS homolog (523 aa).

The LisH domain occupies 16–48; it reads KKHEFIRILVQCLYSLGFKNSASCLEFESKILY. In terms of domain architecture, CTLH spans 49–107; it reads KTADSEFLEKQVLSGNWDSCVQVLDRIFDNSMDDTRNTALYLVFKQCLLEYLKRGDVSL. WD repeat units lie at residues 222–261, 267–306, 310–353, 355–394, 395–434, 438–480, and 483–523; these read AHKN…KVEL, SHQN…LRHT, NNTG…KAWR, TRIP…ERVI, SEEQ…KQPL, GHRQ…PLEV, and GHSM…KPLN.

In terms of assembly, interacts with RANBPM.

It is found in the cytoplasm. The chain is WD repeat-containing protein WDS homolog from Arabidopsis thaliana (Mouse-ear cress).